A 286-amino-acid polypeptide reads, in one-letter code: Bifunctional protein FolD (286 aa).

NADP(+)-binding positions include 166–168, S191, and I232; that span reads GQS.

This sequence belongs to the tetrahydrofolate dehydrogenase/cyclohydrolase family. In terms of assembly, homodimer.

The catalysed reaction is (6R)-5,10-methylene-5,6,7,8-tetrahydrofolate + NADP(+) = (6R)-5,10-methenyltetrahydrofolate + NADPH. The enzyme catalyses (6R)-5,10-methenyltetrahydrofolate + H2O = (6R)-10-formyltetrahydrofolate + H(+). It functions in the pathway one-carbon metabolism; tetrahydrofolate interconversion. In terms of biological role, catalyzes the oxidation of 5,10-methylenetetrahydrofolate to 5,10-methenyltetrahydrofolate and then the hydrolysis of 5,10-methenyltetrahydrofolate to 10-formyltetrahydrofolate. The protein is Bifunctional protein FolD of Alkalilimnicola ehrlichii (strain ATCC BAA-1101 / DSM 17681 / MLHE-1).